Reading from the N-terminus, the 252-residue chain is Probable transcriptional regulatory protein A1C_04175 (252 aa).

This sequence belongs to the TACO1 family.

Its subcellular location is the cytoplasm. This Rickettsia akari (strain Hartford) protein is Probable transcriptional regulatory protein A1C_04175.